The sequence spans 218 residues: Probable GTP-binding protein EngB (218 aa).

The EngB-type G domain maps to 31-205; that stretch reads VGVEIAFAGR…LGILNEWCHP (175 aa). GTP-binding positions include 39 to 46, 66 to 70, 84 to 87, 151 to 154, and 184 to 186; these read GRSNAGKS, GRTQL, DLPG, TKCD, and FSS. Residues Ser-46 and Thr-68 each contribute to the Mg(2+) site.

It belongs to the TRAFAC class TrmE-Era-EngA-EngB-Septin-like GTPase superfamily. EngB GTPase family. Mg(2+) serves as cofactor.

Functionally, necessary for normal cell division and for the maintenance of normal septation. This chain is Probable GTP-binding protein EngB, found in Shewanella loihica (strain ATCC BAA-1088 / PV-4).